We begin with the raw amino-acid sequence, 119 residues long: Ribonuclease P protein component (119 aa).

Belongs to the RnpA family. As to quaternary structure, consists of a catalytic RNA component (M1 or rnpB) and a protein subunit.

It carries out the reaction Endonucleolytic cleavage of RNA, removing 5'-extranucleotides from tRNA precursor.. Its function is as follows. RNaseP catalyzes the removal of the 5'-leader sequence from pre-tRNA to produce the mature 5'-terminus. It can also cleave other RNA substrates such as 4.5S RNA. The protein component plays an auxiliary but essential role in vivo by binding to the 5'-leader sequence and broadening the substrate specificity of the ribozyme. The sequence is that of Ribonuclease P protein component from Streptococcus equi subsp. equi (strain 4047).